The chain runs to 76 residues: Conotoxin Ca11b (76 aa).

The N-terminal stretch at 1–19 (MKLVLAIVVILMLLSLSTG) is a signal peptide. The propeptide occupies 20–42 (AEMSDNHASMSANALRDRLLGPK). 4 disulfides stabilise this stretch: Cys-46–Cys-60, Cys-53–Cys-65, Cys-59–Cys-69, and Cys-64–Cys-76.

As to expression, expressed by the venom duct.

It is found in the secreted. The chain is Conotoxin Ca11b from Conus caracteristicus (Characteristic cone).